The following is a 254-amino-acid chain: Pyruvate dehydrogenase complex repressor (254 aa).

The HTH gntR-type domain maps to 9–77; the sequence is PKLSDVIEQQ…QGGGTFVQSS (69 aa). Residues 37 to 56 constitute a DNA-binding region (H-T-H motif); the sequence is ERELAKQFDVSRPSLREAIQ.

Functionally, transcriptional repressor for the pyruvate dehydrogenase complex genes aceEF and lpd. The protein is Pyruvate dehydrogenase complex repressor (pdhR) of Escherichia coli O6:H1 (strain CFT073 / ATCC 700928 / UPEC).